The sequence spans 126 residues: Protein ApaG (126 aa).

An ApaG domain is found at 2–126; it reads SDPRYQIDVS…FRLAVPGALH (125 aa).

This Ectopseudomonas mendocina (strain ymp) (Pseudomonas mendocina) protein is Protein ApaG.